Consider the following 64-residue polypeptide: DNA-binding protein 7a (64 aa).

It belongs to the 7 kDa DNA-binding/endoribonuclease P2 family. As to quaternary structure, monomer.

It localises to the cytoplasm. Can constrain negative DNA supercoils. May be involved in maintaining the integrity of the genome at high temperature. The sequence is that of DNA-binding protein 7a from Saccharolobus islandicus (strain L.D.8.5 / Lassen #2) (Sulfolobus islandicus).